Here is a 128-residue protein sequence, read N- to C-terminus: Large ribosomal subunit protein uL22 (128 aa).

Belongs to the universal ribosomal protein uL22 family. As to quaternary structure, part of the 50S ribosomal subunit.

Functionally, this protein binds specifically to 23S rRNA; its binding is stimulated by other ribosomal proteins, e.g. L4, L17, and L20. It is important during the early stages of 50S assembly. It makes multiple contacts with different domains of the 23S rRNA in the assembled 50S subunit and ribosome. The globular domain of the protein is located near the polypeptide exit tunnel on the outside of the subunit, while an extended beta-hairpin is found that lines the wall of the exit tunnel in the center of the 70S ribosome. The sequence is that of Large ribosomal subunit protein uL22 from Methylocella silvestris (strain DSM 15510 / CIP 108128 / LMG 27833 / NCIMB 13906 / BL2).